A 226-amino-acid chain; its full sequence is Probable chemoreceptor glutamine deamidase CheD (226 aa).

This sequence belongs to the CheD family.

It catalyses the reaction L-glutaminyl-[protein] + H2O = L-glutamyl-[protein] + NH4(+). In terms of biological role, probably deamidates glutamine residues to glutamate on methyl-accepting chemotaxis receptors (MCPs), playing an important role in chemotaxis. This is Probable chemoreceptor glutamine deamidase CheD from Bordetella avium (strain 197N).